The sequence spans 5088 residues: Replicase polyprotein 1ab (5088 aa).

A helical transmembrane segment spans residues 26–46 (VTNVIQYWTPILTMLLLAIYI). Positions 301–323 (EIEDDTEAEETQKTKRKGKLQPQ) are disordered. Transmembrane regions (helical) follow at residues 343–363 (HLTF…MSPT), 1132–1152 (GLFL…AITI), 1156–1176 (TMMM…HLLL), 1201–1221 (YGCL…LAYI), and 1250–1270 (ILIP…VSYV). Residues H1434 and C1539 each act as for 3C-like proteinase in the active site. 2 helical membrane passes run 1729-1749 (FTHT…LFFV) and 1758-1778 (ILSS…YGLV). Residues 3093–3112 (KPNCPMVPSEVPVRNKHKSA) form a disordered region. The region spanning 4351-4616 (MNIVMDDCIC…MTQCIYQSFV (266 aa)) is the ExoN domain. Catalysis depends on residues D4362, E4364, and D4481. The Zn(2+) site is built by C4498, C4504, C4522, and H4525. Residues H4599, D4604, K4880, D4969, K4998, and E5035 contribute to the active site. A Nidovirus-type SAM-dependent 2'-O-MTase domain is found at 4844–5088 (LNNHAALAKA…RQSVFRYSPK (245 aa)).

In terms of assembly, homodimer. Post-translationally, specific enzymatic cleavages in vivo by its own protease yield mature proteins. 3CL-PRO is autocatalytically processed.

Its subcellular location is the membrane. The catalysed reaction is a 5'-end (5'-triphosphoguanosine)-ribonucleoside in mRNA + S-adenosyl-L-methionine = a 5'-end (N(7)-methyl 5'-triphosphoguanosine)-ribonucleoside in mRNA + S-adenosyl-L-homocysteine. The enzyme catalyses RNA(n) + a ribonucleoside 5'-triphosphate = RNA(n+1) + diphosphate. It catalyses the reaction ATP + H2O = ADP + phosphate + H(+). It carries out the reaction a 5'-end (N(7)-methyl 5'-triphosphoguanosine)-ribonucleoside in mRNA + S-adenosyl-L-methionine = a 5'-end (N(7)-methyl 5'-triphosphoguanosine)-(2'-O-methyl-ribonucleoside) in mRNA + S-adenosyl-L-homocysteine + H(+). Functionally, cysteine protease responsible for the majority of cleavages of the polyprotein. Recognizes substrates containing the core sequence [NT]-[EHKQSY]-|-[AGNST]. The helicase which contains a zinc finger structure displays RNA and DNA duplex-unwinding activities with 5' to 3' polarity. In terms of biological role, RNA-directed RNA polymerase that catalyzes the transcription of viral genomic and subgenomic RNAs. Its function is as follows. Catalyzes the RNA N7-guanylyltransferase reaction to methylate the core cap structure GpppN-RNA into the type-0 cap (m)GpppN-RNA. The sequence is that of Replicase polyprotein 1ab from Ochlerotatus harrisoni (CAVV).